We begin with the raw amino-acid sequence, 204 residues long: FMN-dependent NADH:quinone oxidoreductase (204 aa).

Residues Ser-10 and Ser-16–Ser-18 contribute to the FMN site.

This sequence belongs to the azoreductase type 1 family. In terms of assembly, homodimer. The cofactor is FMN.

It carries out the reaction 2 a quinone + NADH + H(+) = 2 a 1,4-benzosemiquinone + NAD(+). It catalyses the reaction N,N-dimethyl-1,4-phenylenediamine + anthranilate + 2 NAD(+) = 2-(4-dimethylaminophenyl)diazenylbenzoate + 2 NADH + 2 H(+). Quinone reductase that provides resistance to thiol-specific stress caused by electrophilic quinones. In terms of biological role, also exhibits azoreductase activity. Catalyzes the reductive cleavage of the azo bond in aromatic azo compounds to the corresponding amines. This is FMN-dependent NADH:quinone oxidoreductase from Ruegeria pomeroyi (strain ATCC 700808 / DSM 15171 / DSS-3) (Silicibacter pomeroyi).